Here is a 513-residue protein sequence, read N- to C-terminus: Maturase K (513 aa).

The protein belongs to the intron maturase 2 family. MatK subfamily.

Its subcellular location is the plastid. It localises to the chloroplast. In terms of biological role, usually encoded in the trnK tRNA gene intron. Probably assists in splicing its own and other chloroplast group II introns. This is Maturase K from Panicum capillare (Witchgrass).